Consider the following 295-residue polypeptide: tRNA-cytidine(32) 2-sulfurtransferase (295 aa).

Positions 59–64 match the PP-loop motif motif; sequence SGGKDS. Positions 134, 137, and 225 each coordinate [4Fe-4S] cluster.

Belongs to the TtcA family. In terms of assembly, homodimer. The cofactor is Mg(2+). Requires [4Fe-4S] cluster as cofactor.

It localises to the cytoplasm. The enzyme catalyses cytidine(32) in tRNA + S-sulfanyl-L-cysteinyl-[cysteine desulfurase] + AH2 + ATP = 2-thiocytidine(32) in tRNA + L-cysteinyl-[cysteine desulfurase] + A + AMP + diphosphate + H(+). The protein operates within tRNA modification. In terms of biological role, catalyzes the ATP-dependent 2-thiolation of cytidine in position 32 of tRNA, to form 2-thiocytidine (s(2)C32). The sulfur atoms are provided by the cysteine/cysteine desulfurase (IscS) system. The protein is tRNA-cytidine(32) 2-sulfurtransferase of Ruegeria sp. (strain TM1040) (Silicibacter sp.).